Reading from the N-terminus, the 177-residue chain is Large ribosomal subunit protein uL6 (177 aa).

Positions 157–177 (YKGKGVRYAGEKVRRKEGKKK) are disordered.

It belongs to the universal ribosomal protein uL6 family. As to quaternary structure, part of the 50S ribosomal subunit.

This protein binds to the 23S rRNA, and is important in its secondary structure. It is located near the subunit interface in the base of the L7/L12 stalk, and near the tRNA binding site of the peptidyltransferase center. This is Large ribosomal subunit protein uL6 from Caulobacter vibrioides (strain ATCC 19089 / CIP 103742 / CB 15) (Caulobacter crescentus).